Consider the following 488-residue polypeptide: WD repeat-containing protein slp1 (488 aa).

Disordered regions lie at residues 1–29 (MEIA…PNSP) and 74–93 (CGSP…FIPS). The span at 7-17 (SSTISPTFSTP) shows a compositional bias: low complexity. WD repeat units lie at residues 178–215 (IDDY…VSAL), 219–258 (DEST…KLRT), 261–298 (GHQA…HQIG), 302–341 (GHSS…PKFT), 344–386 (NHNA…RVNT), 388–429 (DAGS…LTKQ), and 434–473 (AHDT…HVKR).

This sequence belongs to the WD repeat CDC20/Fizzy family. Interacts with cdc13, mad3 and mes1.

Required for mad2-dependent spindle checkpoint activation. Promotes ubiquitin-dependent degradation of cdc13 by the anaphase promoting complex/cyclosome (APC/C). The sequence is that of WD repeat-containing protein slp1 (slp1) from Schizosaccharomyces pombe (strain 972 / ATCC 24843) (Fission yeast).